The following is a 919-amino-acid chain: MAADVFMCSPRRPRSRGRQVLLKPQVSEDDDDSDTDEPSPPPASGAATPARAHASAAPPPPRAGPGREEPPRRQQIIHSGHFMVSSPHREHPPKKGYDFDTVNKQTCQTYSFGKTSSCHLSIDASLTKLFECMTLAYSGKLVSPKWKNFKGLKLQWRDKIRLNNAIWRAWYMQYLEKRKNPVCHFVTPLDGSVDVDEHRRPEAITTEGKYWKSRIEIVIREYHKWRTYFKKRLQQHKDEDLSSLVQDDDMLYWHKHGDGWKTPVPMEEDPLLDTDMLMSEFSDTLFSTLSSHQPVAWPNPREIAHLGNADMIQPGLIPLQPNLDFMDTFEPFQDLFSSSRSIFGSMLPASASAPVPDPNNPPAQESILPTTALPTVSLPDSLIAPPTAPSLAHMDEQGCEHTSRTEDPFIQPTDFGPSEPPLSVPQPFLPVFTMPLLSPSPAPPPISPVLPLVPPPATALNPPAPPTFHQPQKFAGVNKAPSVITHTASATLTHDAPATTFSQSQGLVITTHHPAPSAAPCGLALSPVTRPPQPRLTFVHPKPVSLTGGRPKQPHKIVPAPKPEPVSLVLKNARIAPAAFSGQPQAVIMTSGPLKREGMLASTVSQSNVVIAPAAIARAPGVPEFHSSILVTDLGHGTSSPPAPVSRLFPSTAQDPLGKGEQVPLHGGSPQVTVTGPSRDCPNSGQASPCASEQSPSPQSPQNNCSGKSDPKNVAALKNRQMKHISAEQKRRFNIKMCFDMLNSLISNNSKLTSHAITLQKTVEYITKLQQERGQMQEEARRLREEIEELNATIISCQQLLPATGVPVTRRQFDHMKDMFDEYVKTRTLQNWKFWIFSIIIKPLFESFKGMVSTSSLEELHRTALSWLDQHCSLPILRPMVLSTLRQLSTSTSILTDPAQLPEQASKAVTRIGKRLGES.

The segment at 1–72 is disordered; the sequence is MAADVFMCSP…AGPGREEPPR (72 aa). The residue at position 2 (Ala2) is an N-acetylalanine. Residues Ser9, Ser27, Ser33, and Ser39 each carry the phosphoserine modification. Residues 27–37 are compositionally biased toward acidic residues; it reads SEDDDDSDTDE. Residues 44 to 56 show a composition bias toward low complexity; sequence SGAATPARAHASA. Positions 73 to 327 are required for cytoplasmic localization; that stretch reads RQQIIHSGHF…PLQPNLDFMD (255 aa). The tract at residues 322-445 is transactivation domain; it reads NLDFMDTFEP…LLSPSPAPPP (124 aa). 2 disordered regions span residues 542–562 and 633–712; these read KPVS…PAPK and DLGH…SDPK. A Phosphoserine modification is found at Ser669. Over residues 670-685 the composition is skewed to polar residues; it reads PQVTVTGPSRDCPNSG. The span at 686–706 shows a compositional bias: low complexity; the sequence is QASPCASEQSPSPQSPQNNCS. The bHLH domain maps to 719-769; the sequence is NRQMKHISAEQKRRFNIKMCFDMLNSLISNNSKLTSHAITLQKTVEYITKL. A leucine-zipper region spans residues 769–790; that stretch reads LQQERGQMQEEARRLREEIEEL. Residues 832–881 are mediates heterotypic interactions between MLXIP and MLX and is required for cytoplasmic localization; the sequence is WKFWIFSIIIKPLFESFKGMVSTSSLEELHRTALSWLDQHCSLPILRPMV.

As to quaternary structure, efficient DNA binding requires dimerization with another bHLH protein. Binds DNA as a homodimer or a heterodimer with MLX. Widely expressed in adult tissues. Most abundant in skeletal muscle.

It is found in the cytoplasm. The protein resides in the nucleus. The protein localises to the mitochondrion outer membrane. In terms of biological role, binds DNA as a heterodimer with MLX and activates transcription. Binds to the canonical E box sequence 5'-CACGTG-3'. Plays a role in transcriptional activation of glycolytic target genes. Involved in glucose-responsive gene regulation. This Homo sapiens (Human) protein is MLX-interacting protein.